The following is a 279-amino-acid chain: Protein gustavus (279 aa).

A B30.2/SPRY domain is found at 36 to 233 (PARIDILLDM…ITMRYIGGLD (198 aa)). An SOCS box domain is found at 234–279 (PEPLPLMDLCRRTIRQKIGRTNLEEHIQQLQLPLSMKTYLLYKNRR). The segment at 236-279 (PLPLMDLCRRTIRQKIGRTNLEEHIQQLQLPLSMKTYLLYKNRR) is involved in binding to the Elongin BC complex.

The protein belongs to the SPSB family. As to quaternary structure, interacts (via B30.2/SPRY domain) with vas; this interaction may be necessary for the transport of vas to the posterior pole of the oocyte. Interacts with Cul-5. May associate with the Elongin BC complex composed of Elongin-B and Elongin-C. Expressed in ovaries, primarily in nurse cells and oocytes (at protein level).

It localises to the cytoplasm. The protein resides in the nucleus. In terms of biological role, involved in the localization of vas to the posterior pole of the oocyte. Required maternally in the germ line for efficient primordial germ cell formation. The protein is Protein gustavus (gus) of Drosophila melanogaster (Fruit fly).